The chain runs to 2442 residues: Piezo-type mechanosensitive ion channel component 1 (2442 aa).

The Extracellular portion of the chain corresponds to 1–5 (MTVPP). A helical transmembrane segment spans residues 6–26 (LLKSCVVKLLLPAALLAAAII). Arg27 is a topological domain (cytoplasmic). Residues 28 to 48 (PSFLSIGYVLLALVSAVLPPI) traverse the membrane as a helical segment. The Extracellular portion of the chain corresponds to 49–56 (RKSLALPK). A helical transmembrane segment spans residues 57-77 (LVGTFVIITFLFCLAVALGVG). The Cytoplasmic segment spans residues 78-122 (SYQISEQVVHKNDRTYICNRSDTTLFRSIGLVRFHPTGTFESTRA). Residues 123-143 (FLPEIIATSAALLTIIIVMFL) form a helical membrane-spanning segment. Over 144 to 173 (SHRDEQLDVVGDVVTVRSESGREQRRQRKL) the chain is Extracellular. The helical transmembrane segment at 174–196 (AAIMWSAIGNSLRRLTNFVLFLF) threads the bilayer. Topologically, residues 197–198 (TA) are cytoplasmic. Residues 199-219 (YVGIVKPSLSNSIYFLAFLFI) traverse the membrane as a helical segment. Residues 220-239 (STWWSTYTPLRHGVYNQIKK) are Extracellular-facing. A helical membrane pass occupies residues 240-260 (FLIFYSALHFLVLYTYQIPIV). The Cytoplasmic portion of the chain corresponds to 261-303 (HHSWLPTGSFLPRLFGLTVLMDSSCPEWWKFPFVAPDFNDDDL). A helical membrane pass occupies residues 304–324 (IMKWPLYANPIVVLVFFYLTV). Topologically, residues 325–454 (AQYKFTRNGS…GDKESAASKG (130 aa)) are extracellular. 3 N-linked (GlcNAc...) asparagine glycosylation sites follow: Asn332, Asn392, and Asn440. Residues 389 to 417 (LLSNASSSANDDEQGRARSRSPLRNGEEQ) form a disordered region. Residues 455 to 475 (MIAVMTFVIFHSYSIALTAMM) traverse the membrane as a helical segment. Over 476–478 (TWA) the chain is Cytoplasmic. Residues 479 to 499 (LLYHSIFGLILLILTCILWIF) form a helical membrane-spanning segment. Residues 500–506 (RDTRKSS) lie on the Extracellular side of the membrane. A helical transmembrane segment spans residues 507–527 (FAMAPIILMYIEFLLILQYFL). Topologically, residues 528 to 552 (SMDIHAEIGDPAWMNFVGIEWTTLP) are cytoplasmic. Residues 553 to 573 (VHAVIILCVQTLLTLPVFLLL) form a helical membrane-spanning segment. Residues 574–633 (RLARREKFYESLSDYERQRRINSYGTFGASKTGAGGVAVAKFQDPKSRKFAAFVEYLSNK) are Extracellular-facing. Residues 634-654 (VSVYFIFVVSVVLLVVSTCFA) traverse the membrane as a helical segment. Topologically, residues 655 to 656 (PN) are cytoplasmic. The helical transmembrane segment at 657-677 (FYNILFFALWALNLIYLKFSF) threads the bilayer. Residues 678-683 (RLYRGL) are Extracellular-facing. Residues 684-704 (AYAFWLTLTFYTSIVIIALYI) traverse the membrane as a helical segment. Residues 705–739 (YQFPGVSQWIIRNTSLSQEWLNAIGLVDFRAIGES) are Cytoplasmic-facing. The helical transmembrane segment at 740 to 760 (GALFLQLLAPIALFVVTMLQL) threads the bilayer. At 761–832 (KFFHGPWSRA…WRFFEVHISK (72 aa)) the chain is on the extracellular side. A disordered region spans residues 768 to 798 (SRATSPRRAENDPPTSTTEAAAVASTSGTQG). Positions 782-794 (TSTTEAAAVASTS) are enriched in low complexity. N-linked (GlcNAc...) asparagine glycosylation occurs at Asn816. Residues 833 to 853 (IVFVIIAIFIANNINALYIPL) traverse the membrane as a helical segment. The Cytoplasmic segment spans residues 854-874 (VILLSLAICLPSAADGIFSLF). A helical membrane pass occupies residues 875–895 (MCAYLFLVALSKMIYQLDIVP). Over 896–931 (ELSQIDRGVGADNCSHGNISMPEWFGLKKEVEGTEP) the chain is Extracellular. 2 N-linked (GlcNAc...) asparagine glycosylation sites follow: Asn908 and Asn913. Residues 932-952 (IYMLFGVIVSIIALAFQSIVI) traverse the membrane as a helical segment. The Cytoplasmic segment spans residues 953–990 (YRQRHYRASLGLPESMRAKVFPDFHHSHFDRSLKNAIQ). Residues 991–1011 (FLIDYGFYKFGLEITMIAIGI) traverse the membrane as a helical segment. Position 1012 (Asp1012) is a topological domain, extracellular. The chain crosses the membrane as a helical span at residues 1013 to 1033 (IFNRMDALAAIQCFWLVLFAL). The Cytoplasmic portion of the chain corresponds to 1034–1041 (NKRVFVRR). The helical transmembrane segment at 1042-1062 (IWVFYVIYMAILYPLQFFSYV) threads the bilayer. The Extracellular segment spans residues 1063 to 1096 (GLPPDSCIEYPWSYWIPSYSDDARFNLSYLLNLS). Residues Asn1088 and Asn1094 are each glycosylated (N-linked (GlcNAc...) asparagine). A helical transmembrane segment spans residues 1097–1117 (IYGVNWPSAYLIGDFFVLLLA). Topologically, residues 1118–1160 (SCQLAVFRREGEDNDSIYNDGNFVIKPENPQYDFIDTKKSYVD) are cytoplasmic. Residues 1161-1181 (YFKSFVFHYGHWITLMSTLAA) form a helical membrane-spanning segment. The Extracellular portion of the chain corresponds to 1182–1187 (GIAGTS). A helical transmembrane segment spans residues 1188–1210 (LFALGYIIFTLTMLWSGNNLYVM). The Cytoplasmic segment spans residues 1211 to 1231 (NSTLRSFEHTLKRWNALLGYT). A helical transmembrane segment spans residues 1232–1252 (LFTITMKVCLQIFGCVFLSWF). The Extracellular portion of the chain corresponds to 1253–1299 (DQSGGWGKTLCIVRQLFSITCVNNECHVLKELEDFSKACAVETKEGN). A helical membrane pass occupies residues 1300–1320 (IGFDVIALSFLVFQIRIFHSW). Topologically, residues 1321 to 1615 (YFQHCMVEYR…VVNCIGAHTD (295 aa)) are cytoplasmic. A disordered region spans residues 1463-1502 (DTIKDPDSRALIAVSEPEARKPGGTEETDGDEDEDNKDSK). Over residues 1488-1498 (EETDGDEDEDN) the composition is skewed to acidic residues. The chain crosses the membrane as a helical span at residues 1616-1636 (ILCYFFAIMTQVMTGGLITLP). Residues 1637–1654 (LPLMSLFWGNLSNPRPSK) lie on the Extracellular side of the membrane. Asn1646 carries N-linked (GlcNAc...) asparagine glycosylation. A helical membrane pass occupies residues 1655-1675 (FFWVTMITYTECVIVIKFVCQ). The Cytoplasmic portion of the chain corresponds to 1676 to 1706 (FAFMPYNSITWRTEHQMDPMSLDKLFGVSQR). A helical transmembrane segment spans residues 1707–1727 (DSFALWDIVLLFSLFFHRYML). Residues 1728 to 1833 (RKLGLWKDAN…KFRYIRDLYP (106 aa)) are Extracellular-facing. Residue Asn1737 is glycosylated (N-linked (GlcNAc...) asparagine). Residues 1834–1854 (IMFGIDVICFLIMTFGYSAFG) traverse the membrane as a helical segment. Residues 1855–1866 (EGGSGNVLDDVK) lie on the Cytoplasmic side of the membrane. Residues 1867 to 1887 (ASRIPVTLVVMLVGMTLAIII) traverse the membrane as a helical segment. Topologically, residues 1888–1900 (DRALYLRKSVVGK) are extracellular. A helical transmembrane segment spans residues 1901–1921 (LIYQVLMIAFLHIWVFLVLPN). The Cytoplasmic portion of the chain corresponds to 1922–1930 (MTRRSAISN). The chain crosses the membrane as a helical span at residues 1931–1951 (HVAQALYVIKSCYFLVSAWQI). At 1952-2046 (RNGYPELCIG…KGKLVKYMMG (95 aa)) the chain is on the extracellular side. Residues 2047-2067 (FPIIIGVVIFIFSPLLLWSLL) form a helical membrane-spanning segment. The Cytoplasmic portion of the chain corresponds to 2068–2346 (NQIGTISMPE…VGFIDRAFPS (279 aa)). A helical membrane pass occupies residues 2347-2367 (FLAKVFKGGVIAVYLSVILVV). Topologically, residues 2368–2442 (GRGLVRGIFT…WTRMSKKKQE (75 aa)) are extracellular.

It belongs to the PIEZO (TC 1.A.75) family. In terms of tissue distribution, expressed in the pharyngeal-intestinal and spermathecal-uterine valves and in multiple reproductive tissues including the germline, somatic oviduct, and spermatheca. During reproduction, it is expressed in sheath cells, sperm, both spermathecal valves and the spermathecal bag cells.

It is found in the cell membrane. In terms of biological role, pore-forming subunit of a mechanosensitive non-specific cation channel. Generates currents characterized by a linear current-voltage relationship. Plays a role in reproduction by positively regulating inter-tissue signaling to promote oocyte maturation, ovulation and fertilization, and sperm navigation from and to the spermatheca. May play a role in regulating cytosolic and endoplasmic reticulum calcium ion release. The sequence is that of Piezo-type mechanosensitive ion channel component 1 from Caenorhabditis elegans.